Reading from the N-terminus, the 371-residue chain is Carlactonoate CLA methyltransferase (371 aa).

Tyr-21 contacts S-adenosyl-L-homocysteine. Gln-28 is a (11R)-carlactonoate binding site. Positions 62, 67, 101, 102, 141, and 142 each coordinate S-adenosyl-L-homocysteine. Residues His-162 and Trp-163 each contribute to the (11R)-carlactonoate site. 4 residues coordinate Mg(2+): Asn-180, Asp-266, Tyr-268, and Asp-269.

It belongs to the methyltransferase superfamily. Type-7 methyltransferase family. SABATH subfamily. In terms of assembly, homodimer. Requires Mg(2+) as cofactor.

The catalysed reaction is (11R)-carlactonoate + S-adenosyl-L-methionine = (11R)-methyl carlactonoate + S-adenosyl-L-homocysteine. In terms of biological role, methyltransferase involved in the biosynthesis of strigolactone natural products, bioactive compounds promoting plant fitness and soil microbe interactions, but preventing shoot branching. Catalyzes the biosynthesis of (11R)-methyl carlactonoate (MeCLA) from (11R)-carlactonoate (CLA), downstream of MAX1; MeCLA is probably biologically active as a hormone regulating shoot branching and serves as a precursor of non-canonical strigolactones (SLs). The sequence is that of Carlactonoate CLA methyltransferase from Arabidopsis thaliana (Mouse-ear cress).